Here is a 363-residue protein sequence, read N- to C-terminus: Cysteine proteinase 15A (363 aa).

Residues 1 to 18 (MDRRFLFALFLFAAVATA) form the signal peptide. Residues 19-131 (VTDDTNNDDF…QKAPILPTTN (113 aa)) constitute a propeptide, activation peptide. Disulfide bonds link cysteine 153-cysteine 203 and cysteine 187-cysteine 236. Residue cysteine 156 is part of the active site. Asparagine 249 carries N-linked (GlcNAc...) asparagine glycosylation. Cysteine 292 and cysteine 347 are oxidised to a cystine. Active-site residues include histidine 299 and asparagine 326.

This sequence belongs to the peptidase C1 family.

The chain is Cysteine proteinase 15A from Pisum sativum (Garden pea).